Reading from the N-terminus, the 198-residue chain is Recombination protein RecR (198 aa).

The C4-type zinc finger occupies 57–72; the sequence is CSICGNLTDDDPCHIC. The Toprim domain maps to 80–175; it reads TTILVVEDAK…KVTRLARGLA (96 aa).

It belongs to the RecR family.

In terms of biological role, may play a role in DNA repair. It seems to be involved in an RecBC-independent recombinational process of DNA repair. It may act with RecF and RecO. The protein is Recombination protein RecR of Streptococcus pyogenes serotype M5 (strain Manfredo).